The sequence spans 330 residues: Ribosomal RNA small subunit methyltransferase C (330 aa).

Belongs to the methyltransferase superfamily. RsmC family. As to quaternary structure, monomer.

Its subcellular location is the cytoplasm. The enzyme catalyses guanosine(1207) in 16S rRNA + S-adenosyl-L-methionine = N(2)-methylguanosine(1207) in 16S rRNA + S-adenosyl-L-homocysteine + H(+). In terms of biological role, specifically methylates the guanine in position 1207 of 16S rRNA in the 30S particle. The protein is Ribosomal RNA small subunit methyltransferase C of Haemophilus influenzae (strain 86-028NP).